A 397-amino-acid polypeptide reads, in one-letter code: Lysophospholipid transporter LplT (397 aa).

Helical transmembrane passes span 16–36, 53–73, 91–111, 139–159, 164–184, 227–247, 253–273, 281–301, 305–325, 352–372, and 373–393; these read MLAV…LLFA, VLQM…GQFA, LGAG…LVGI, LMES…GILA, LAAL…NLWI, LFWG…PVAL, AMPT…AGAA, TVSR…AFAV, LLPA…FIVP, NVAM…GVPP, and VAVG…LWVW.

Belongs to the major facilitator superfamily. LplT (TC 2.A.1.42) family.

It is found in the cell inner membrane. Functionally, catalyzes the facilitated diffusion of 2-acyl-glycero-3-phosphoethanolamine (2-acyl-GPE) into the cell. The chain is Lysophospholipid transporter LplT from Klebsiella pneumoniae (strain 342).